A 240-amino-acid chain; its full sequence is Small ribosomal subunit protein uS2 (240 aa).

The protein belongs to the universal ribosomal protein uS2 family.

In Wigglesworthia glossinidia brevipalpis, this protein is Small ribosomal subunit protein uS2.